The chain runs to 198 residues: Urease accessory protein UreE (198 aa).

Residues 137-198 (ARGAYHSPGG…RGHDHDHKHD (62 aa)) are disordered. A compositionally biased stretch (basic and acidic residues) spans 149–198 (HGHDHDHNHDHGHDHAHDHNHGHDHDHEHGYEHEHEHRHDRGHDHDHKHD).

This sequence belongs to the UreE family.

It is found in the cytoplasm. Its function is as follows. Involved in urease metallocenter assembly. Binds nickel. Probably functions as a nickel donor during metallocenter assembly. The polypeptide is Urease accessory protein UreE (Rhizobium johnstonii (strain DSM 114642 / LMG 32736 / 3841) (Rhizobium leguminosarum bv. viciae)).